The following is a 141-amino-acid chain: Galactose-6-phosphate isomerase subunit LacA (141 aa).

It belongs to the LacAB/RpiB family. Heteromultimeric protein consisting of LacA and LacB.

The catalysed reaction is aldehydo-D-galactose 6-phosphate = keto-D-tagatose 6-phosphate. It functions in the pathway carbohydrate metabolism; D-galactose 6-phosphate degradation; D-tagatose 6-phosphate from D-galactose 6-phosphate: step 1/1. This Streptococcus equi subsp. equi (strain 4047) protein is Galactose-6-phosphate isomerase subunit LacA.